A 157-amino-acid polypeptide reads, in one-letter code: Cuticle protein 19 (157 aa).

6 consecutive repeat copies span residues A11–A14, A18–A21, A24–A27, A29–A32, A39–A42, and A47–A50. Residues Y56 to A127 form the Chitin-binding type R&amp;R domain. The stretch at A141–A144 is repeat 7.

Functionally, component of the cuticle of migratory locust which contains more than 100 different structural proteins. The polypeptide is Cuticle protein 19 (Locusta migratoria (Migratory locust)).